Consider the following 53-residue polypeptide: uncharacterized protein (53 aa).

The helical transmembrane segment at 4 to 24 threads the bilayer; sequence FILLIVGFIYGAGGVLLYSVY.

It localises to the host membrane. This is an uncharacterized protein from Acidianus bottle-shaped virus (isolate Italy/Pozzuoli) (ABV).